The following is a 164-amino-acid chain: Putative L,D-transpeptidase YkuD (164 aa).

Positions 2–45 (LTYQVKQGDTLNSIAADFRISTAALLQANPSLQAGLTAGQSIVI) constitute a LysM domain. A L,D-TPase catalytic domain is found at 56-163 (YHIAVSIGAK…VPNGTRVTIN (108 aa)). The Proton donor/acceptor role is filled by His123. The active-site Nucleophile is the Cys139.

Belongs to the YkuD family. Monomer.

The protein localises to the spore wall. Its pathway is cell wall biogenesis; peptidoglycan biosynthesis. Its function is as follows. Probable enzyme that may play an important role in cell wall biology. The sequence is that of Putative L,D-transpeptidase YkuD (ykuD) from Bacillus subtilis (strain 168).